Here is a 95-residue protein sequence, read N- to C-terminus: Large ribosomal subunit protein uL23 (95 aa).

This sequence belongs to the universal ribosomal protein uL23 family. In terms of assembly, part of the 50S ribosomal subunit. Contacts protein L29, and trigger factor when it is bound to the ribosome.

Functionally, one of the early assembly proteins it binds 23S rRNA. One of the proteins that surrounds the polypeptide exit tunnel on the outside of the ribosome. Forms the main docking site for trigger factor binding to the ribosome. The chain is Large ribosomal subunit protein uL23 from Pediococcus pentosaceus (strain ATCC 25745 / CCUG 21536 / LMG 10740 / 183-1w).